Consider the following 480-residue polypeptide: Cyclin L homolog cyl-1 (480 aa).

Residues 25–58 are disordered; sequence PKEQNGNVEPKKEEDEKFESTYKQNENTQITPSS. Residues 33-44 are compositionally biased toward basic and acidic residues; that stretch reads EPKKEEDEKFES. Polar residues predominate over residues 45-58; sequence TYKQNENTQITPSS. The Cyclin N-terminal domain maps to 91–230; the sequence is PSLVDGLSKE…RRILATLGFV (140 aa). Residues 368–480 are disordered; the sequence is KMAPDGEKST…ESSTPPRSRR (113 aa). Composition is skewed to basic and acidic residues over residues 384–409 and 418–442; these read KDSR…GKKE and NDRD…DEKK. The span at 443 to 453 shows a compositional bias: basic residues; the sequence is DRRKRTRSRSR. Residues 454–472 show a composition bias toward basic and acidic residues; it reads DRKDKNRNRDVGKRYRKES.

Belongs to the cyclin family.

Its function is as follows. Involved in pre-mRNA splicing. Functions in association with cyclin-dependent kinases (CDKs). Involved in induction of expression of heat shock protein hsp-16.2 in response to heat shock. Plays a role in male tail development, perhaps acting together with cell cycle regulators cdc-25.2, cdk-1, cyb-3, and cyd-1. The chain is Cyclin L homolog cyl-1 from Caenorhabditis elegans.